We begin with the raw amino-acid sequence, 382 residues long: Pyrimidine monooxygenase RutA (382 aa).

FMN-binding positions include 68-69 (IK), N134, E143, 159-160 (RY), and S209.

Belongs to the NtaA/SnaA/DszA monooxygenase family. RutA subfamily.

The enzyme catalyses uracil + FMNH2 + NADH + O2 = (Z)-3-ureidoacrylate + FMN + NAD(+) + H2O + H(+). It catalyses the reaction thymine + FMNH2 + NADH + O2 = (Z)-2-methylureidoacrylate + FMN + NAD(+) + H2O + H(+). Its function is as follows. Catalyzes the pyrimidine ring opening between N-3 and C-4 by an unusual flavin hydroperoxide-catalyzed mechanism, adding oxygen atoms in the process to yield ureidoacrylate peracid, that immediately reacts with FMN forming ureidoacrylate and FMN-N(5)-oxide. The FMN-N(5)-oxide reacts spontaneously with NADH to produce FMN. Requires the flavin reductase RutF to regenerate FMN in vivo. In Escherichia coli (strain K12 / MC4100 / BW2952), this protein is Pyrimidine monooxygenase RutA.